The chain runs to 82 residues: uncharacterized protein (82 aa).

This is an uncharacterized protein from Escherichia coli (strain K12).